Here is a 198-residue protein sequence, read N- to C-terminus: Small ribosomal subunit protein uS4 (198 aa).

The 64-residue stretch at 91–154 (SRLDNVVYRL…KNLNIVQEAV (64 aa)) folds into the S4 RNA-binding domain.

The protein belongs to the universal ribosomal protein uS4 family. Part of the 30S ribosomal subunit. Contacts protein S5. The interaction surface between S4 and S5 is involved in control of translational fidelity.

Its function is as follows. One of the primary rRNA binding proteins, it binds directly to 16S rRNA where it nucleates assembly of the body of the 30S subunit. With S5 and S12 plays an important role in translational accuracy. The protein is Small ribosomal subunit protein uS4 of Onion yellows phytoplasma (strain OY-M).